We begin with the raw amino-acid sequence, 177 residues long: Alkyl hydroperoxide reductase AhpD (177 aa).

The active-site Proton donor is the C130. Residues C130 and C133 are joined by a disulfide bond. Catalysis depends on C133, which acts as the Cysteine sulfenic acid (-SOH) intermediate.

It belongs to the AhpD family. Homotrimer.

The catalysed reaction is N(6)-[(R)-dihydrolipoyl]-L-lysyl-[lipoyl-carrier protein] + a hydroperoxide = N(6)-[(R)-lipoyl]-L-lysyl-[lipoyl-carrier protein] + an alcohol + H2O. Functionally, antioxidant protein with alkyl hydroperoxidase activity. Required for the reduction of the AhpC active site cysteine residues and for the regeneration of the AhpC enzyme activity. The protein is Alkyl hydroperoxide reductase AhpD of Mycobacterium bovis (strain ATCC BAA-935 / AF2122/97).